The primary structure comprises 247 residues: AA9 family lytic polysaccharide monooxygenase A (247 aa).

A signal peptide spans 1-19 (MVRLASLAVLGSVIATASA). 2 residues coordinate Cu(2+): histidine 20 and histidine 100. A disulfide bond links cysteine 60 and cysteine 185. O2 is bound at residue histidine 165. Tyrosine 182 contributes to the Cu(2+) binding site. Asparagine 193 carries an N-linked (GlcNAc...) asparagine glycan.

It belongs to the polysaccharide monooxygenase AA9 family. Requires Cu(2+) as cofactor.

It is found in the secreted. The enzyme catalyses [(1-&gt;4)-beta-D-glucosyl]n+m + reduced acceptor + O2 = 4-dehydro-beta-D-glucosyl-[(1-&gt;4)-beta-D-glucosyl]n-1 + [(1-&gt;4)-beta-D-glucosyl]m + acceptor + H2O.. Lytic polysaccharide monooxygenase (LPMO) that depolymerizes polysaccharides via the oxidation of scissile alpha- or beta-(1-4)-glycosidic bonds, yielding C4 oxidation products. Catalysis by LPMOs requires the reduction of the active-site copper from Cu(II) to Cu(I) by a reducing agent and H(2)O(2) or O(2) as a cosubstrate. Shows C4-oxidative cleavage of amorphous cellulose and soluble cello-oligosaccharides. Also active on xyloglucan, mixed-linkage beta-glucan, and glucomannan. Not active on crystalline forms of cellulose. Has higher affinity for linear substrates compared to branched substrates. Catalyzes a fast and specific peroxygenase reaction that is at least two orders of magnitude faster than the apparent monooxygenase reaction. This is AA9 family lytic polysaccharide monooxygenase A from Schizophyllum commune (strain H4-8 / FGSC 9210) (Split gill fungus).